The chain runs to 319 residues: Acetyl-coenzyme A carboxylase carboxyl transferase subunit alpha (319 aa).

The 262-residue stretch at 35–296 (DLDKEIKQLE…KQRLIEQLNE (262 aa)) folds into the CoA carboxyltransferase C-terminal domain.

This sequence belongs to the AccA family. Acetyl-CoA carboxylase is a heterohexamer composed of biotin carboxyl carrier protein (AccB), biotin carboxylase (AccC) and two subunits each of ACCase subunit alpha (AccA) and ACCase subunit beta (AccD).

It localises to the cytoplasm. The enzyme catalyses N(6)-carboxybiotinyl-L-lysyl-[protein] + acetyl-CoA = N(6)-biotinyl-L-lysyl-[protein] + malonyl-CoA. The protein operates within lipid metabolism; malonyl-CoA biosynthesis; malonyl-CoA from acetyl-CoA: step 1/1. Component of the acetyl coenzyme A carboxylase (ACC) complex. First, biotin carboxylase catalyzes the carboxylation of biotin on its carrier protein (BCCP) and then the CO(2) group is transferred by the carboxyltransferase to acetyl-CoA to form malonyl-CoA. The sequence is that of Acetyl-coenzyme A carboxylase carboxyl transferase subunit alpha from Aliivibrio salmonicida (strain LFI1238) (Vibrio salmonicida (strain LFI1238)).